Here is a 389-residue protein sequence, read N- to C-terminus: Putative F-box/kelch-repeat protein At4g35120 (389 aa).

Positions 24-70 (SMSISSLPDEIVLSFLALISKSYYRSLSLVSKSFYSLLSSTEIYAAR) constitute an F-box domain. Kelch repeat units lie at residues 128 to 174 (EIYK…FLDG), 176 to 225 (IYVI…AVSG), and 227 to 273 (RLYV…MKPI).

In Arabidopsis thaliana (Mouse-ear cress), this protein is Putative F-box/kelch-repeat protein At4g35120.